The chain runs to 568 residues: Urease subunit alpha (568 aa).

Residues 130–568 (GGIDTHIHFI…LPMAQRYFLF (439 aa)) form the Urease domain. Residues H135, H137, and K218 each coordinate Ni(2+). K218 carries the N6-carboxylysine modification. Residue H220 coordinates substrate. H247 and H273 together coordinate Ni(2+). H321 serves as the catalytic Proton donor. Position 361 (D361) interacts with Ni(2+).

Belongs to the metallo-dependent hydrolases superfamily. Urease alpha subunit family. As to quaternary structure, heterotrimer of UreA (gamma), UreB (beta) and UreC (alpha) subunits. Three heterotrimers associate to form the active enzyme. It depends on Ni cation as a cofactor. In terms of processing, carboxylation allows a single lysine to coordinate two nickel ions.

It is found in the cytoplasm. It catalyses the reaction urea + 2 H2O + H(+) = hydrogencarbonate + 2 NH4(+). Its pathway is nitrogen metabolism; urea degradation; CO(2) and NH(3) from urea (urease route): step 1/1. This is Urease subunit alpha from Burkholderia orbicola (strain MC0-3).